The following is a 536-amino-acid chain: Putative ATP-dependent RNA helicase L364 (536 aa).

The region spanning I47–P214 is the Helicase ATP-binding domain. Residue S60 to T67 coordinates ATP. Positions D160–H163 match the DEAH box motif. Positions L288–K334 form a coiled coil. In terms of domain architecture, Helicase C-terminal spans F338–E486. Positions V502–V536 are disordered.

This sequence belongs to the DEAD box helicase family. DEAH subfamily.

The enzyme catalyses ATP + H2O = ADP + phosphate + H(+). This chain is Putative ATP-dependent RNA helicase L364, found in Acanthamoeba polyphaga (Amoeba).